We begin with the raw amino-acid sequence, 132 residues long: uncharacterized protein (132 aa).

The tract at residues 17 to 75 (RSAVPRWPHLSSQSGVEPPDRWTGTPGWPSRDQEAPGSMMPPAAAQPSAHGALVPPATA) is disordered. Over residues 51 to 65 (APGSMMPPAAAQPSA) the composition is skewed to low complexity.

In terms of tissue distribution, expressed exclusively in heart.

It is found in the cytoplasm. This is an uncharacterized protein from Homo sapiens (Human).